Reading from the N-terminus, the 232-residue chain is Thrombin-like enzyme bothrombin (232 aa).

Residues 1–223 enclose the Peptidase S1 domain; that stretch reads VIGGDECDIN…YLPWIQSIIA (223 aa). Cystine bridges form between Cys-7-Cys-139, Cys-26-Cys-42, Cys-74-Cys-230, Cys-118-Cys-184, Cys-150-Cys-163, and Cys-174-Cys-199. Catalysis depends on charge relay system residues His-41 and Asp-86. 2 N-linked (GlcNAc...) asparagine glycosylation sites follow: Asn-98 and Asn-146. Residue Ser-178 is the Charge relay system of the active site. Asn-225 carries an N-linked (GlcNAc...) asparagine glycan.

Belongs to the peptidase S1 family. Snake venom subfamily. In terms of assembly, monomer. In terms of tissue distribution, expressed by the venom gland.

The protein resides in the secreted. The enzyme catalyses Selective cleavage of Arg-|-Xaa bond in fibrinogen, to form fibrin, and release fibrinopeptide A. The specificity of further degradation of fibrinogen varies with species origin of the enzyme.. Its activity is regulated as follows. Inhibited by diisopropylfluorophosphate (DFP), but not by hirudin. Thrombin-like snake venom serine protease that clots fibrinogen by releasing fibrinopeptide A from the alpha chain of fibrinogen (FGA), induces platelet aggregation through its interaction with GPIb (GP1BA/GP1BB), and activates factor VIII (F8). The polypeptide is Thrombin-like enzyme bothrombin (Bothrops jararaca (Jararaca)).